The chain runs to 407 residues: MFRDSFLFARTIGCFGCFGSSGSRNQQSPKPYDDDTHSCDSDVTSTARGEEEEDEEEVEQKSRSKRSEEILKYRLDNGLICRHIPVRETNELIRGEDENGDKTINEYVRVCKIGSGSYGKVVLYRSTLDGQYYAIKAFHKSHLLRLRVAPSETAMSDVLREVMIMKILEHPNIVNLIEVIDDPETDHFYMVLEYVDGKWVYDGSGPPGALGEKTARKYLRDIVTGLMYLHAHDVIHGDIKPDNLLVTSSGTVKIGDFSVSQVFKDDDDQLRRSPGTPVFTAPECCLVSGITYSGRAADTWAVGVTLYCMILGQYPFLADTLQDTYDKIVNNPLIIPDGLNPLLRDLIEGLLCKDPSQRMTLKNVSEHPWVIGEDGHVPEYFCWCKRNAASKIEEGEANGISETSDPN.

A disordered region spans residues 21 to 64 (SGSRNQQSPKPYDDDTHSCDSDVTSTARGEEEEDEEEVEQKSRS). Positions 31–40 (PYDDDTHSCD) are enriched in basic and acidic residues. The Protein kinase domain occupies 107 to 370 (YVRVCKIGSG…LKNVSEHPWV (264 aa)). ATP contacts are provided by residues 113-121 (IGSGSYGKV) and Lys-136. Thr-153 carries the phosphothreonine; by autocatalysis modification. The Proton acceptor role is filled by Asp-238. At Ser-260 the chain carries Phosphoserine; by KIN10.

It belongs to the protein kinase superfamily. Ser/Thr protein kinase family. Associates with the SNF1-related protein kinase (SnRK) complex. Interacts with AL1, a geminivirus (TGMV) protein essential for viral replication. As to expression, expressed in shoot apical meristem, leaf primordium and emerging petiole (at protein level).

It carries out the reaction L-seryl-[protein] + ATP = O-phospho-L-seryl-[protein] + ADP + H(+). The catalysed reaction is L-threonyl-[protein] + ATP = O-phospho-L-threonyl-[protein] + ADP + H(+). Its activity is regulated as follows. Activated when autophosphorylated at Thr-153 and inactivated when phosphorylated at Ser-260 by SnRK1.1/KIN10. Activates SnRK1.1/KIN10 and SnRK1.2/KIN11 by phosphorylation of their activation-loop 'Thr-198' and 'Thr-176', respectively. Required for the regulation by SnRK1 kinases of the transcription of a large set of genes, the modification the activity of metabolic enzymes, and the control of various nutrient-responsive cellular developmental processes. This chain is Serine/threonine-protein kinase GRIK2 (GRIK2), found in Arabidopsis thaliana (Mouse-ear cress).